We begin with the raw amino-acid sequence, 179 residues long: Large ribosomal subunit protein uL5 (179 aa).

This sequence belongs to the universal ribosomal protein uL5 family. As to quaternary structure, part of the 50S ribosomal subunit; part of the 5S rRNA/L5/L18/L25 subcomplex. Contacts the 5S rRNA and the P site tRNA. Forms a bridge to the 30S subunit in the 70S ribosome.

Functionally, this is one of the proteins that bind and probably mediate the attachment of the 5S RNA into the large ribosomal subunit, where it forms part of the central protuberance. In the 70S ribosome it contacts protein S13 of the 30S subunit (bridge B1b), connecting the 2 subunits; this bridge is implicated in subunit movement. Contacts the P site tRNA; the 5S rRNA and some of its associated proteins might help stabilize positioning of ribosome-bound tRNAs. The sequence is that of Large ribosomal subunit protein uL5 from Buchnera aphidicola subsp. Acyrthosiphon kondoi (Acyrthosiphon kondoi symbiotic bacterium).